A 167-amino-acid chain; its full sequence is Large ribosomal subunit protein uL23 (167 aa).

Residues 1–118 form a large ribosomal subunit protein uL23 region; the sequence is MNVNEIIKGP…TEEKAKIAKK (118 aa). Disordered stretches follow at residues 91–112 and 136–167; these read FEDESPQDQKDSETVSENTEEK and KQAELAKKDSETNENQEKRIENQTENQENSAN. Composition is skewed to basic and acidic residues over residues 97 to 112 and 136 to 157; these read QDQKDSETVSENTEEK and KQAELAKKDSETNENQEKRIEN. The interval 119 to 167 is unknown; that stretch reads KAELEAKNKEIAEKLAKKQAELAKKDSETNENQEKRIENQTENQENSAN. Polar residues predominate over residues 158 to 167; that stretch reads QTENQENSAN.

This sequence belongs to the universal ribosomal protein uL23 family. Part of the 50S ribosomal subunit. Contacts protein L29, and trigger factor when it is bound to the ribosome.

In terms of biological role, one of the early assembly proteins it binds 23S rRNA. One of the proteins that surrounds the polypeptide exit tunnel on the outside of the ribosome. Forms the main docking site for trigger factor binding to the ribosome. This is Large ribosomal subunit protein uL23 from Mesomycoplasma hyopneumoniae (strain J / ATCC 25934 / NCTC 10110) (Mycoplasma hyopneumoniae).